Consider the following 806-residue polypeptide: Glycerol-3-phosphate acyltransferase (806 aa).

The short motif at 305 to 310 is the HXXXXD motif element; the sequence is CHRSHM.

It belongs to the GPAT/DAPAT family.

The protein localises to the cell inner membrane. The enzyme catalyses sn-glycerol 3-phosphate + an acyl-CoA = a 1-acyl-sn-glycero-3-phosphate + CoA. Its pathway is phospholipid metabolism; CDP-diacylglycerol biosynthesis; CDP-diacylglycerol from sn-glycerol 3-phosphate: step 1/3. In Salmonella arizonae (strain ATCC BAA-731 / CDC346-86 / RSK2980), this protein is Glycerol-3-phosphate acyltransferase.